The chain runs to 250 residues: Proteasome subunit alpha type-7-B (250 aa).

Residue lysine 62 forms a Glycyl lysine isopeptide (Lys-Gly) (interchain with G-Cter in ubiquitin) linkage.

This sequence belongs to the peptidase T1A family. As to quaternary structure, component of the 20S core complex of the 26S proteasome. The 26S proteasome is composed of a core protease (CP), known as the 20S proteasome, capped at one or both ends by the 19S regulatory particle (RP/PA700). The 20S proteasome core is composed of 28 subunits that are arranged in four stacked rings, resulting in a barrel-shaped structure. The two end rings are each formed by seven alpha subunits, and the two central rings are each formed by seven beta subunits. The catalytic chamber with the active sites is on the inside of the barrel.

It is found in the cytoplasm. The protein resides in the nucleus. Its function is as follows. The proteasome is a multicatalytic proteinase complex which is characterized by its ability to cleave peptides with Arg, Phe, Tyr, Leu, and Glu adjacent to the leaving group at neutral or slightly basic pH. The proteasome has an ATP-dependent proteolytic activity. The polypeptide is Proteasome subunit alpha type-7-B (PAD2) (Arabidopsis thaliana (Mouse-ear cress)).